The sequence spans 567 residues: SRSF protein kinase 3 (567 aa).

Gly residues predominate over residues 1 to 16; it reads MSASTGGGGDSGGSGG. Residues 1–36 are disordered; the sequence is MSASTGGGGDSGGSGGSSSSSQASCGPESSGSELAL. Positions 17–32 are enriched in low complexity; that stretch reads SSSSSQASCGPESSGS. S50 carries the post-translational modification Phosphoserine. The Protein kinase domain occupies 79-565; the sequence is YHVVRKLGWG…AADCLQHPWL (487 aa). Residues 85–93 and K108 each bind ATP; that span reads LGWGHFSTV. D212 functions as the Proton acceptor in the catalytic mechanism. Disordered stretches follow at residues 238–283 and 298–351; these read QQAG…RLLE and ATQA…SQTS. Positions 248–258 are enriched in polar residues; the sequence is SIVSTAPQEVL. The segment covering 264–279 has biased composition (basic residues); the sequence is SKNKRKKMRRKRKQQK. Residues 327 to 348 are compositionally biased toward low complexity; that stretch reads AGPSPASSSPAPGGGRSLSAGS. S330 is modified (phosphoserine).

Belongs to the protein kinase superfamily. CMGC Ser/Thr protein kinase family. Expressed in skeletal and heart muscle. Also expressed in the fetal brain.

It localises to the nucleus. The protein localises to the cytoplasm. The enzyme catalyses L-seryl-[protein] + ATP = O-phospho-L-seryl-[protein] + ADP + H(+). The catalysed reaction is L-threonyl-[protein] + ATP = O-phospho-L-threonyl-[protein] + ADP + H(+). Its function is as follows. Serine/arginine-rich protein-specific kinase which specifically phosphorylates its substrates at serine residues located in regions rich in arginine/serine dipeptides, known as RS domains. Phosphorylates the SR splicing factor SRSF1 and the lamin-B receptor (LBR) in vitro. Required for normal muscle development. This chain is SRSF protein kinase 3 (SRPK3), found in Homo sapiens (Human).